A 439-amino-acid polypeptide reads, in one-letter code: Serine/threonine-protein kinase 2 (439 aa).

The region spanning Asn-87–Asn-439 is the Protein kinase domain. Residues Ile-93 to Val-101 and Lys-117 contribute to the ATP site. Asp-307 acts as the Proton acceptor in catalysis.

This sequence belongs to the protein kinase superfamily. Ser/Thr protein kinase family. Phosphorylated in vivo. Autophosphorylated in vitro.

It is found in the host endoplasmic reticulum. It localises to the host endoplasmic reticulum-Golgi intermediate compartment. It catalyses the reaction L-seryl-[protein] + ATP = O-phospho-L-seryl-[protein] + ADP + H(+). It carries out the reaction L-threonyl-[protein] + ATP = O-phospho-L-threonyl-[protein] + ADP + H(+). Functionally, essential serine-protein kinase involved in the early stage of virion morphogenesis. This is Serine/threonine-protein kinase 2 (OPG054) from Monkeypox virus.